Here is a 989-residue protein sequence, read N- to C-terminus: E3 ubiquitin-protein ligase Arkadia (989 aa).

Residues Lys19, Lys33, Lys46, Lys58, Lys72, Lys86, Lys95, and Lys109 each participate in a glycyl lysine isopeptide (Lys-Gly) (interchain with G-Cter in SUMO2) cross-link. The interval 63-195 is disordered; it reads FSHLCDDSQK…TEADPVPSLL (133 aa). Residues 65–88 show a composition bias toward basic and acidic residues; sequence HLCDDSQKQEKDMTGNQQEQEKSG. Polar residues predominate over residues 97-109; that stretch reads QQAGPSYVQNCVK. The span at 110 to 120 shows a compositional bias: basic and acidic residues; sequence ENQEILGRRQQ. Residues 131–144 are compositionally biased toward low complexity; sequence SSLSECLSSPSSSL. Lys172 is covalently cross-linked (Glycyl lysine isopeptide (Lys-Gly) (interchain with G-Cter in SUMO2)). Basic residues predominate over residues 173-183; that stretch reads SRSHSARSHKW. Glycyl lysine isopeptide (Lys-Gly) (interchain with G-Cter in SUMO2) cross-links involve residues Lys197 and Lys217. Positions 213-293 are disordered; it reads KRLVKSSSSQ…PSNPAAPSGS (81 aa). Positions 240 to 402 are interaction with AXIN1; it reads ALAQRKYALL…VPTTSARMDS (163 aa). Composition is skewed to low complexity over residues 248-270 and 278-291; these read LLSSSSSSSENDLSSDSSSSSST and ASASENPSNPAAPS. Positions 298 to 302 match the SUMO interaction motif 1 (SIM) motif; the sequence is VVVIE. The short motif at 323 to 329 is the SUMO interaction motif 2 (SIM) element; it reads EVEIVTV. A disordered region spans residues 335–367; it reads SRSTLGHSRSHWSQGSSSHTGRPQESRNRSRIS. A compositionally biased stretch (low complexity) spans 345–355; the sequence is HWSQGSSSHTG. The short motif at 380 to 384 is the SUMO interaction motif 3 (SIM) element; that stretch reads VVDLT. Disordered stretches follow at residues 388–475, 506–559, and 641–675; these read DEPT…MPRL, HGHH…YHDQ, and MPPPYASLTRPLHHQASACHHSHGNAPPQTQPPPQ. Residues 393-451 show a composition bias toward polar residues; the sequence is VPTTSARMDSQTTSASINNSNPSTSEQASDTTSTVASSQPSTVSETEATLTSNSATGSS. The span at 506–520 shows a compositional bias: basic residues; it reads HGHHFQHHHHHHHTP. Residues 548–558 show a composition bias toward polar residues; that stretch reads ANSSSGSSYHD. Residues 902-904 are ubiquitin binding; that stretch reads YPH. Residues Lys918 and Lys922 each participate in a glycyl lysine isopeptide (Lys-Gly) (interchain with G-Cter in SUMO2) cross-link. Positions 937 and 940 each coordinate Zn(2+). The RING-type; atypical zinc finger occupies 937 to 978; the sequence is CTICLSILEEGEDVRRLPCMHLFHQVCVDQWLITNKKCPICR. Positions 952–956 are ubiquitin binding; the sequence is RLPCM. Zn(2+) is bound by residues His960 and Cys963.

This sequence belongs to the Arkadia family. As to quaternary structure, monomer. Interacts with SMAD6, SMAD7, AXIN1, AXIN2 and SKIL isoform SNON. Interacts with (phosphorylated) SMAD2 and SMAD3. Part of a complex containing RNF111, AXIN1 and SMAD7. Interacts (via SIM domains) with SUMO1 and SUMO2. In terms of tissue distribution, ubiquitously expressed.

The protein localises to the nucleus. The protein resides in the cytoplasm. It localises to the PML body. It carries out the reaction S-ubiquitinyl-[E2 ubiquitin-conjugating enzyme]-L-cysteine + [acceptor protein]-L-lysine = [E2 ubiquitin-conjugating enzyme]-L-cysteine + N(6)-ubiquitinyl-[acceptor protein]-L-lysine.. It functions in the pathway protein modification; protein ubiquitination. Binds free ubiquitin non-covalently via its RING-type zinc finger. Ubiquitin-binding leads to enhance the E3 ubiquitin-protein ligase activity by stabilizing the ubiquitin-conjugating enzyme E2 (donor ubiquitin) in the 'closed' conformation and activating ubiquitin transfer. E3 ubiquitin-protein ligase required for mesoderm patterning during embryonic development. Acts as an enhancer of the transcriptional responses of the SMAD2/SMAD3 effectors, which are activated downstream of BMP. Acts by mediating ubiquitination and degradation of SMAD inhibitors such as SMAD7, inducing their proteasomal degradation and thereby enhancing the transcriptional activity of TGF-beta and BMP. In addition to enhance transcription of SMAD2/SMAD3 effectors, also regulates their turnover by mediating their ubiquitination and subsequent degradation, coupling their activation with degradation, thereby ensuring that only effectors 'in use' are degraded. Activates SMAD3/SMAD4-dependent transcription by triggering signal-induced degradation of SNON isoform of SKIL. Associates with UBE2D2 as an E2 enzyme. Specifically binds polysumoylated chains via SUMO interaction motifs (SIMs) and mediates ubiquitination of sumoylated substrates. Catalyzes 'Lys-63'-linked ubiquitination of sumoylated XPC in response to UV irradiation, promoting nucleotide excision repair. Mediates ubiquitination and degradation of sumoylated PML. The regulation of the BMP-SMAD signaling is however independent of sumoylation and is not dependent of SUMO interaction motifs (SIMs). The chain is E3 ubiquitin-protein ligase Arkadia from Mus musculus (Mouse).